The following is a 474-amino-acid chain: Glutamate--tRNA ligase (474 aa).

The 'HIGH' region motif lies at 9–19 (PSPTGYLHVGG). The 'KMSKS' region signature appears at 240 to 244 (KLSKR). Residue K243 participates in ATP binding.

This sequence belongs to the class-I aminoacyl-tRNA synthetase family. Glutamate--tRNA ligase type 1 subfamily. In terms of assembly, monomer.

The protein localises to the cytoplasm. The catalysed reaction is tRNA(Glu) + L-glutamate + ATP = L-glutamyl-tRNA(Glu) + AMP + diphosphate. In terms of biological role, catalyzes the attachment of glutamate to tRNA(Glu) in a two-step reaction: glutamate is first activated by ATP to form Glu-AMP and then transferred to the acceptor end of tRNA(Glu). This is Glutamate--tRNA ligase from Vibrio parahaemolyticus serotype O3:K6 (strain RIMD 2210633).